The chain runs to 76 residues: Exodeoxyribonuclease 7 small subunit (76 aa).

The protein belongs to the XseB family. As to quaternary structure, heterooligomer composed of large and small subunits.

The protein localises to the cytoplasm. It catalyses the reaction Exonucleolytic cleavage in either 5'- to 3'- or 3'- to 5'-direction to yield nucleoside 5'-phosphates.. Its function is as follows. Bidirectionally degrades single-stranded DNA into large acid-insoluble oligonucleotides, which are then degraded further into small acid-soluble oligonucleotides. In Legionella pneumophila subsp. pneumophila (strain Philadelphia 1 / ATCC 33152 / DSM 7513), this protein is Exodeoxyribonuclease 7 small subunit.